A 182-amino-acid chain; its full sequence is NADH-quinone oxidoreductase subunit I (182 aa).

2 4Fe-4S ferredoxin-type domains span residues 52–82 and 92–121; these read LTRD…LQKA and DFFR…LTPD. [4Fe-4S] cluster-binding residues include Cys62, Cys65, Cys68, Cys72, Cys101, Cys104, Cys107, and Cys111.

It belongs to the complex I 23 kDa subunit family. In terms of assembly, NDH-1 is composed of 13 different subunits. Subunits NuoA, H, J, K, L, M, N constitute the membrane sector of the complex. It depends on [4Fe-4S] cluster as a cofactor.

Its subcellular location is the cell inner membrane. The catalysed reaction is a quinone + NADH + 5 H(+)(in) = a quinol + NAD(+) + 4 H(+)(out). Its function is as follows. NDH-1 shuttles electrons from NADH, via FMN and iron-sulfur (Fe-S) centers, to quinones in the respiratory chain. The immediate electron acceptor for the enzyme in this species is believed to be ubiquinone. Couples the redox reaction to proton translocation (for every two electrons transferred, four hydrogen ions are translocated across the cytoplasmic membrane), and thus conserves the redox energy in a proton gradient. The chain is NADH-quinone oxidoreductase subunit I from Pseudomonas savastanoi pv. phaseolicola (strain 1448A / Race 6) (Pseudomonas syringae pv. phaseolicola (strain 1448A / Race 6)).